The sequence spans 357 residues: DNA integrity scanning protein DisA (357 aa).

One can recognise a DAC domain in the interval 8-146 (VKSMINILQL…GNLRYTLKDI (139 aa)). ATP is bound by residues Gly-75, Leu-93, and 106 to 110 (MRHRT).

This sequence belongs to the DisA family. In terms of assembly, homooctamer. It depends on Mg(2+) as a cofactor.

It carries out the reaction 2 ATP = 3',3'-c-di-AMP + 2 diphosphate. Its function is as follows. Participates in a DNA-damage check-point that is active prior to asymmetric division when DNA is damaged. DisA forms globular foci that rapidly scan along the chromosomes during sporulation, searching for lesions. When a lesion is present, DisA pauses at the lesion site. This triggers a cellular response that culminates in a temporary block in sporulation initiation. In terms of biological role, also has diadenylate cyclase activity, catalyzing the condensation of 2 ATP molecules into cyclic di-AMP (c-di-AMP). c-di-AMP acts as a signaling molecule that couples DNA integrity with progression of sporulation. The rise in c-di-AMP level generated by DisA while scanning the chromosome, operates as a positive signal that advances sporulation; upon encountering a lesion, the DisA focus arrests at the damaged site and halts c-di-AMP synthesis. In Bacillus cereus (strain AH187), this protein is DNA integrity scanning protein DisA.